Reading from the N-terminus, the 396-residue chain is Peptide chain release factor 1, mitochondrial (396 aa).

N5-methylglutamine is present on Q268. A disordered region spans residues 317–340 (LEKEEKERNARKDQVSTTDRSDKI).

This sequence belongs to the prokaryotic/mitochondrial release factor family. Methylation of glutamine in the GGQ triplet is conserved from bacteria to mammals.

Its subcellular location is the mitochondrion. In terms of biological role, mitochondrial peptide chain release factor that directs the termination of translation in response to the peptide chain termination codons UAA and UAG. This Kluyveromyces lactis (strain ATCC 8585 / CBS 2359 / DSM 70799 / NBRC 1267 / NRRL Y-1140 / WM37) (Yeast) protein is Peptide chain release factor 1, mitochondrial (MRF1).